The following is a 208-amino-acid chain: Thymidylate kinase (208 aa).

10–17 serves as a coordination point for ATP; that stretch reads GIDGSGKT.

The protein belongs to the thymidylate kinase family.

It carries out the reaction dTMP + ATP = dTDP + ADP. Functionally, phosphorylation of dTMP to form dTDP in both de novo and salvage pathways of dTTP synthesis. The sequence is that of Thymidylate kinase from Ligilactobacillus salivarius (strain UCC118) (Lactobacillus salivarius).